We begin with the raw amino-acid sequence, 524 residues long: Glutamyl-tRNA(Gln) amidotransferase subunit A, mitochondrial (524 aa).

Active-site charge relay system residues include lysine 76 and serine 171. The active-site Acyl-ester intermediate is serine 195.

This sequence belongs to the amidase family. GatA subfamily. Subunit of the heterotrimeric GatCAB amidotransferase (AdT) complex, composed of A (qrsl1), B (gatb) and C (gatc) subunits.

It is found in the mitochondrion. The enzyme catalyses L-glutamyl-tRNA(Gln) + L-glutamine + ATP + H2O = L-glutaminyl-tRNA(Gln) + L-glutamate + ADP + phosphate + H(+). Allows the formation of correctly charged Gln-tRNA(Gln) through the transamidation of misacylated Glu-tRNA(Gln) in the mitochondria. The reaction takes place in the presence of glutamine and ATP through an activated gamma-phospho-Glu-tRNA(Gln). In Xenopus laevis (African clawed frog), this protein is Glutamyl-tRNA(Gln) amidotransferase subunit A, mitochondrial (qrsl1).